A 180-amino-acid polypeptide reads, in one-letter code: MEEMKQKWTDMLTEFQEQAGLTDGSLLVIGCSTSEAAGSRIGTAGSGDWAELIYGGLNRFKEKTGVHLAFQCCEHLNRALVIEAETAERFRLPIVSAVPVPKAGGAMASYAYRQMRSPVLAESIQADAGIDIGDTFIGMHLKPVAVPVRISSRELGEAHVTMARTRPKLIGGIRAVYECE.

This sequence belongs to the UPF0340 family.

This Bacillus velezensis (strain DSM 23117 / BGSC 10A6 / LMG 26770 / FZB42) (Bacillus amyloliquefaciens subsp. plantarum) protein is UPF0340 protein RBAM_034070.